The following is a 91-amino-acid chain: Small ribosomal subunit protein uS15c (91 aa).

It belongs to the universal ribosomal protein uS15 family. In terms of assembly, part of the 30S ribosomal subunit.

The protein localises to the plastid. Its subcellular location is the chloroplast. In Phalaenopsis aphrodite subsp. formosana (Moth orchid), this protein is Small ribosomal subunit protein uS15c (rps15).